The primary structure comprises 308 residues: Transaldolase (308 aa).

K125 acts as the Schiff-base intermediate with substrate in catalysis.

It belongs to the transaldolase family. Type 1 subfamily. Homodimer.

The protein localises to the cytoplasm. It carries out the reaction D-sedoheptulose 7-phosphate + D-glyceraldehyde 3-phosphate = D-erythrose 4-phosphate + beta-D-fructose 6-phosphate. Its pathway is carbohydrate degradation; pentose phosphate pathway; D-glyceraldehyde 3-phosphate and beta-D-fructose 6-phosphate from D-ribose 5-phosphate and D-xylulose 5-phosphate (non-oxidative stage): step 2/3. In terms of biological role, transaldolase is important for the balance of metabolites in the pentose-phosphate pathway. The sequence is that of Transaldolase from Pseudomonas putida (strain GB-1).